The primary structure comprises 440 residues: Proline--tRNA ligase (440 aa).

It belongs to the class-II aminoacyl-tRNA synthetase family. ProS type 2 subfamily. In terms of assembly, homodimer.

The protein localises to the cytoplasm. It carries out the reaction tRNA(Pro) + L-proline + ATP = L-prolyl-tRNA(Pro) + AMP + diphosphate. Functionally, catalyzes the attachment of proline to tRNA(Pro) in a two-step reaction: proline is first activated by ATP to form Pro-AMP and then transferred to the acceptor end of tRNA(Pro). This is Proline--tRNA ligase from Methylocella silvestris (strain DSM 15510 / CIP 108128 / LMG 27833 / NCIMB 13906 / BL2).